Here is a 422-residue protein sequence, read N- to C-terminus: UDP-N-acetylglucosamine 1-carboxyvinyltransferase 2 (422 aa).

A phosphoenolpyruvate-binding site is contributed by 22 to 23; it reads KN. Arg-93 lines the UDP-N-acetyl-alpha-D-glucosamine pocket. Cys-117 functions as the Proton donor in the catalytic mechanism. A 2-(S-cysteinyl)pyruvic acid O-phosphothioketal modification is found at Cys-117. Residues 122–126, Asp-308, and Ile-330 each bind UDP-N-acetyl-alpha-D-glucosamine; that span reads RPVDL.

The protein belongs to the EPSP synthase family. MurA subfamily.

It localises to the cytoplasm. The catalysed reaction is phosphoenolpyruvate + UDP-N-acetyl-alpha-D-glucosamine = UDP-N-acetyl-3-O-(1-carboxyvinyl)-alpha-D-glucosamine + phosphate. It functions in the pathway cell wall biogenesis; peptidoglycan biosynthesis. In terms of biological role, cell wall formation. Adds enolpyruvyl to UDP-N-acetylglucosamine. This Legionella pneumophila (strain Lens) protein is UDP-N-acetylglucosamine 1-carboxyvinyltransferase 2.